A 197-amino-acid polypeptide reads, in one-letter code: Nascent polypeptide-associated complex subunit alpha (197 aa).

The segment covering 1–20 (MAEPVEDSVDEISSEGDSDV) has biased composition (acidic residues). Disordered stretches follow at residues 1–46 (MAEP…RKLL) and 120–154 (GADR…SKAD). The region spanning 36 to 101 (DKNERKSRKL…AKVEDMSQNS (66 aa)) is the NAC-A/B domain. Over residues 134–154 (SGHDHAHDHDHSHGDCASKAD) the composition is skewed to basic and acidic residues. In terms of domain architecture, UBA spans 158 to 195 (VNQSDIDLVVSQVGCTREQAVEALIKNKGDIVETIMQL).

The protein belongs to the NAC-alpha family.

In terms of biological role, may promote appropriate targeting of ribosome-nascent polypeptide complexes. This is Nascent polypeptide-associated complex subunit alpha from Babesia divergens.